A 312-amino-acid polypeptide reads, in one-letter code: UPF0725 protein At3g19520 (312 aa).

Belongs to the UPF0725 (EMB2204) family.

This chain is UPF0725 protein At3g19520, found in Arabidopsis thaliana (Mouse-ear cress).